Reading from the N-terminus, the 246-residue chain is tRNA pseudouridine synthase A (246 aa).

Residue Asp-52 is the Nucleophile of the active site. Tyr-111 serves as a coordination point for substrate.

It belongs to the tRNA pseudouridine synthase TruA family. As to quaternary structure, homodimer.

It catalyses the reaction uridine(38/39/40) in tRNA = pseudouridine(38/39/40) in tRNA. Its function is as follows. Formation of pseudouridine at positions 38, 39 and 40 in the anticodon stem and loop of transfer RNAs. This is tRNA pseudouridine synthase A from Borreliella burgdorferi (strain ZS7) (Borrelia burgdorferi).